The primary structure comprises 394 residues: S-adenosylmethionine synthase 2 (394 aa).

Glu-11 contacts Mg(2+). Residue His-17 participates in ATP binding. Position 45 (Glu-45) interacts with K(+). The L-methionine site is built by Glu-58 and Gln-101. ATP-binding positions include 169–171 (DGK), 237–240 (SGRF), Asp-248, 254–255 (RK), Ala-271, Lys-275, and Lys-279. Asp-248 is an L-methionine binding site. L-methionine is bound at residue Lys-279.

This sequence belongs to the AdoMet synthase family. Homotetramer. The cofactor is Mn(2+). Mg(2+) serves as cofactor. Co(2+) is required as a cofactor. It depends on K(+) as a cofactor.

It localises to the cytoplasm. The enzyme catalyses L-methionine + ATP + H2O = S-adenosyl-L-methionine + phosphate + diphosphate. It functions in the pathway amino-acid biosynthesis; S-adenosyl-L-methionine biosynthesis; S-adenosyl-L-methionine from L-methionine: step 1/1. In terms of biological role, catalyzes the formation of S-adenosylmethionine from methionine and ATP. The reaction comprises two steps that are both catalyzed by the same enzyme: formation of S-adenosylmethionine (AdoMet) and triphosphate, and subsequent hydrolysis of the triphosphate. The protein is S-adenosylmethionine synthase 2 (SAM2) of Hordeum vulgare (Barley).